Reading from the N-terminus, the 662-residue chain is Glycogen debranching enzyme (662 aa).

The active-site Nucleophile is Asp338. Catalysis depends on Glu373, which acts as the Proton donor.

This sequence belongs to the glycosyl hydrolase 13 family.

The catalysed reaction is Hydrolysis of (1-&gt;6)-alpha-D-glucosidic linkages to branches with degrees of polymerization of three or four glucose residues in limit dextrin.. It functions in the pathway glycan degradation; glycogen degradation. In terms of biological role, removes maltotriose and maltotetraose chains that are attached by 1,6-alpha-linkage to the limit dextrin main chain, generating a debranched limit dextrin. The protein is Glycogen debranching enzyme of Yersinia pestis.